A 981-amino-acid chain; its full sequence is Polyhomeotic-like protein 3 (981 aa).

Residues Met1 to Ser28 are compositionally biased toward low complexity. Disordered stretches follow at residues Met1 to Pro33, Leu102 to Leu127, Leu224 to Thr280, and Gln307 to Pro407. Residues Leu224 to Ile255 show a composition bias toward polar residues. Phosphoserine occurs at positions 231, 261, 269, and 312. Over residues Ser256–Lys266 the composition is skewed to basic and acidic residues. Low complexity predominate over residues Gln321–Ser340. Over residues Ala360 to Gln373 the composition is skewed to polar residues. Positions Val381 to Val395 are enriched in low complexity. A phosphothreonine mark is found at Thr607 and Thr612. The residue at position 614 (Ser614) is a Phosphoserine. Positions Lys650 to Pro690 are disordered. Positions Ile667–Leu686 are enriched in low complexity. Glycyl lysine isopeptide (Lys-Gly) (interchain with G-Cter in SUMO2) cross-links involve residues Lys689 and Lys730. The HD1 motif lies at Lys689–Val718. Residues Ser759 and Ser760 each carry the phosphoserine modification. The segment at Glu774–Lys808 adopts an FCS-type zinc-finger fold. Zn(2+)-binding residues include Cys783, Cys786, Cys802, and Cys806. Lys808 participates in a covalent cross-link: Glycyl lysine isopeptide (Lys-Gly) (interchain with G-Cter in SUMO2). Disordered regions lie at residues Arg825 to Gly844 and Glu863 to Arg888. The 65-residue stretch at Trp917–Ser981 folds into the SAM domain.

As to quaternary structure, component of a PRC1-like complex. Ubiquitous expression.

The protein localises to the nucleus. In terms of biological role, component of a Polycomb group (PcG) multiprotein PRC1-like complex, a complex class required to maintain the transcriptionally repressive state of many genes, including Hox genes, throughout development. PcG PRC1 complex acts via chromatin remodeling and modification of histones; it mediates monoubiquitination of histone H2A 'Lys-119', rendering chromatin heritably changed in its expressibility. The sequence is that of Polyhomeotic-like protein 3 (Phc3) from Mus musculus (Mouse).